The chain runs to 366 residues: Tripartite motif-containing protein 54 (366 aa).

The segment at 26-82 adopts an RING-type zinc-finger fold; sequence CPICLEMFSKPVVILPCQHNLCRKCANDVFQASNPLWQSRSSTTVSSGGRFRCPSCR. The B box-type zinc-finger motif lies at 121–163; the sequence is EQHLMCEEHEDEKINIYCLSCEVPTCSLCKVFGAHKDCEVAPL. The Zn(2+) site is built by C126, H129, C149, and H155. The tract at residues 168 to 211 is mediates microtubule-binding and homooligomerization; the sequence is KRQKSELSDGIAMLVAGNDRVQAVITQMEEVCQTIEENSRRQKQ. The stretch at 185–258 forms a coiled coil; the sequence is NDRVQAVITQ…LIRQYGDHLE (74 aa). In terms of domain architecture, COS spans 271–329; sequence MEEPQMALYLQQAKELINKVGTMSKVELAGRPEPGYERMDQFTVSVEHVAEMLRTIDFQ. The interval 326-366 is disordered; the sequence is IDFQPGTSGEEEDEEVAVEGEEGNAGPEEERTDGRESTGQH. The span at 334 to 347 shows a compositional bias: acidic residues; that stretch reads GEEEDEEVAVEGEE. Residues 353 to 366 are compositionally biased toward basic and acidic residues; that stretch reads EEERTDGRESTGQH.

In terms of assembly, homooligomer and heterooligomer. Interacts with TRIM63 and probably with TRIM55. Interacts with tubulin.

The protein localises to the cytoplasm. The protein resides in the cytoskeleton. Its subcellular location is the myofibril. It is found in the sarcomere. It localises to the z line. Its function is as follows. May bind and stabilize microtubules during myotubes formation. This Bos taurus (Bovine) protein is Tripartite motif-containing protein 54 (TRIM54).